Here is a 310-residue protein sequence, read N- to C-terminus: Olfactory receptor 2A14 (310 aa).

The Extracellular segment spans residues 1 to 24 (MEGNKTWITDITLPRFQVGPALEI). An N-linked (GlcNAc...) asparagine glycan is attached at Asn-4. A helical transmembrane segment spans residues 25 to 48 (LLCGLFSAFYTLTLLGNGVIFGII). Residues 49–56 (CLDCKLHT) are Cytoplasmic-facing. A helical transmembrane segment spans residues 57–78 (PMYFFLSHLAIVDISYASNYVP). The Extracellular segment spans residues 79-99 (KMLTNLMNQESTISFFPCIMQ). Cysteines 96 and 188 form a disulfide. The chain crosses the membrane as a helical span at residues 100 to 119 (TFLYLAFAHVECLILVVMSY). At 120–138 (DRYADICHPLRYNSLMSWR) the chain is on the cytoplasmic side. A helical membrane pass occupies residues 139–157 (VCTVLAVASWVFSFLLALV). Residues 158–194 (PLVLILSLPFCGPHEINHFFCEILSVLKLACADTWLN) lie on the Extracellular side of the membrane. The helical transmembrane segment at 195-218 (QVVIFAACVFILVGPLCLVLVSYL) threads the bilayer. The Cytoplasmic segment spans residues 219-235 (RILAAILRIQSGEGRRK). The helical transmembrane segment at 236–258 (AFSTCSSHLCVVGLFFGSAIVTY) threads the bilayer. The Extracellular segment spans residues 259 to 271 (MAPKSRHPEEQQK). A helical membrane pass occupies residues 272 to 291 (VLSLFYSLFNPMLNPLIYSL). Over 292 to 310 (RNAEVKGALRRALRKERLT) the chain is Cytoplasmic.

It belongs to the G-protein coupled receptor 1 family.

The protein resides in the cell membrane. Its function is as follows. Odorant receptor. The protein is Olfactory receptor 2A14 (OR2A14) of Homo sapiens (Human).